A 227-amino-acid polypeptide reads, in one-letter code: Uridylate kinase (227 aa).

7 to 11 serves as a coordination point for ATP; sequence KISGK. Gly-44 serves as a coordination point for UMP. Residues Gly-45 and Arg-49 each coordinate ATP. UMP is bound by residues Asp-66 and 114-120; that span reads FQPGQST. 4 residues coordinate ATP: Thr-140, Asn-141, Tyr-146, and Asp-149.

It belongs to the UMP kinase family. In terms of assembly, homohexamer.

The protein localises to the cytoplasm. The enzyme catalyses UMP + ATP = UDP + ADP. It functions in the pathway pyrimidine metabolism; CTP biosynthesis via de novo pathway; UDP from UMP (UMPK route): step 1/1. Unlike most bacteria, is not activated by GTP. UTP acts as a competitive inhibitor against both substrates. High concentration of UMP abolishes the inhibition of UTP at low ATP concentrations, indicating that UTP binds to the acceptor site (UMP site). Functionally, catalyzes the reversible phosphorylation of UMP to UDP, with ATP as the most efficient phosphate donor. Is also able to phosphorylate dUMP, although much less efficiently. This is Uridylate kinase (pyrH) from Saccharolobus solfataricus (strain ATCC 35092 / DSM 1617 / JCM 11322 / P2) (Sulfolobus solfataricus).